A 725-amino-acid chain; its full sequence is Glutamine-dependent NAD(+) synthetase (725 aa).

Positions 5-275 (VTVATCALNQ…VEVLTATLDL (271 aa)) constitute a CN hydrolase domain. Glu-45 serves as the catalytic Proton acceptor; for glutaminase activity. Lys-114 functions as the For glutaminase activity in the catalytic mechanism. Cys-175 (nucleophile; for glutaminase activity) is an active-site residue. The segment at 325–706 (YHRPEEEISL…KTSQTLEEQI (382 aa)) is ligase. ATP is bound at residue 355–362 (PLSGGVDS). Ser-357 is an active-site residue.

In the C-terminal section; belongs to the NAD synthetase family. In terms of assembly, homohexamer.

The enzyme catalyses deamido-NAD(+) + L-glutamine + ATP + H2O = L-glutamate + AMP + diphosphate + NAD(+) + H(+). It participates in cofactor biosynthesis; NAD(+) biosynthesis; NAD(+) from deamido-NAD(+) (L-Gln route): step 1/1. Catalyzes the final step of the nicotinamide adenine dinucleotide (NAD) de novo synthesis pathway, the ATP-dependent amidation of deamido-NAD using L-glutamine as a nitrogen source. This Rattus norvegicus (Rat) protein is Glutamine-dependent NAD(+) synthetase (Nadsyn1).